A 629-amino-acid polypeptide reads, in one-letter code: 1-deoxy-D-xylulose-5-phosphate synthase (629 aa).

Thiamine diphosphate contacts are provided by residues H72 and 113–115; that span reads GHA. Residue D144 participates in Mg(2+) binding. Residues 145 to 146, N174, Y287, and E370 each bind thiamine diphosphate; that span reads GA. N174 lines the Mg(2+) pocket.

This sequence belongs to the transketolase family. DXPS subfamily. In terms of assembly, homodimer. Mg(2+) is required as a cofactor. Requires thiamine diphosphate as cofactor.

The catalysed reaction is D-glyceraldehyde 3-phosphate + pyruvate + H(+) = 1-deoxy-D-xylulose 5-phosphate + CO2. Its pathway is metabolic intermediate biosynthesis; 1-deoxy-D-xylulose 5-phosphate biosynthesis; 1-deoxy-D-xylulose 5-phosphate from D-glyceraldehyde 3-phosphate and pyruvate: step 1/1. Its function is as follows. Catalyzes the acyloin condensation reaction between C atoms 2 and 3 of pyruvate and glyceraldehyde 3-phosphate to yield 1-deoxy-D-xylulose-5-phosphate (DXP). This is 1-deoxy-D-xylulose-5-phosphate synthase from Prochlorococcus marinus (strain MIT 9312).